Here is a 373-residue protein sequence, read N- to C-terminus: tRNA N6-adenosine threonylcarbamoyltransferase (373 aa).

A divalent metal cation contacts are provided by His133, His137, and Tyr154. Substrate-binding positions include 154–158 (YVSGG), Asp186, Gly201, Glu205, and Asn302. Asp331 contacts a divalent metal cation.

It belongs to the KAE1 / TsaD family. As to quaternary structure, component of the EKC/KEOPS complex composed of at least BUD32, CGI121, GON7, KAE1 and PCC1; the whole complex dimerizes. A divalent metal cation is required as a cofactor.

It localises to the cytoplasm. The protein resides in the nucleus. The catalysed reaction is L-threonylcarbamoyladenylate + adenosine(37) in tRNA = N(6)-L-threonylcarbamoyladenosine(37) in tRNA + AMP + H(+). In terms of biological role, component of the EKC/KEOPS complex that is required for the formation of a threonylcarbamoyl group on adenosine at position 37 (t(6)A37) in tRNAs that read codons beginning with adenine. The complex is probably involved in the transfer of the threonylcarbamoyl moiety of threonylcarbamoyl-AMP (TC-AMP) to the N6 group of A37. KAE1 likely plays a direct catalytic role in this reaction, but requires other protein(s) of the complex to fulfill this activity. The EKC/KEOPS complex also promotes both telomere uncapping and telomere elongation. The complex is required for efficient recruitment of transcriptional coactivators. The polypeptide is tRNA N6-adenosine threonylcarbamoyltransferase (Debaryomyces hansenii (strain ATCC 36239 / CBS 767 / BCRC 21394 / JCM 1990 / NBRC 0083 / IGC 2968) (Yeast)).